The following is a 204-amino-acid chain: Somatotropin (204 aa).

Residues 1–17 (MDRVVLMLSVLSLGVSS) form the signal peptide. Glutamine 18 is modified (pyrrolidone carboxylic acid). Position 36 (histidine 36) interacts with Zn(2+). A disulfide bridge links cysteine 69 with cysteine 177. Glutamate 186 is a binding site for Zn(2+). Cysteine 194 and cysteine 202 are oxidised to a cystine.

Belongs to the somatotropin/prolactin family.

The protein resides in the secreted. In terms of biological role, growth hormone plays an important role in growth control and is involved in the regulation of several anabolic processes. Implicated as an osmoregulatory substance important for seawater adaptation. The polypeptide is Somatotropin (gh) (Acanthopagrus latus (Yellowfin seabream)).